The chain runs to 2193 residues: ATP-dependent helicase BRM (2193 aa).

The residue at position 1 (methionine 1) is an N-acetylmethionine. A compositionally biased stretch (gly residues) spans 1–10; it reads MQSGGSGGGP. Disordered regions lie at residues 1–126, 175–231, 293–466, 511–558, and 580–649; these read MQSG…QEGQ, MQDL…PGNM, QKAG…GFTK, SPAI…DNVG, and TSTD…ASAR. Low complexity predominate over residues 23–62; it reads ASTSSAASPSSSSSSVQQQQQQQQQQQQQQQLASRQQQQQ. A coiled-coil region spans residues 38 to 58; it reads VQQQQQQQQQQQQQQQLASRQ. Positions 79–88 are enriched in gly residues; the sequence is GVQGMMGGGN. Low complexity-rich tracts occupy residues 91-102, 110-126, and 180-192; these read SSPGSMQMPQQS, QQQQ…QEGQ, and PSSQ…SKPS. Residues 204-223 are compositionally biased toward polar residues; that stretch reads ESSSQQRNETKSHPQQQVGT. Over residues 301–320 the composition is skewed to low complexity; the sequence is ASQSPSIPISSQPASSSVVP. Composition is skewed to polar residues over residues 325-339, 347-358, 383-412, and 421-433; these read PHAN…QSGS, STGSFASTSSPR, QPTN…STKK, and QMQQ…TPTP. The segment covering 445–463 has biased composition (low complexity); that stretch reads SNSSLQSGQGTQQAQQRSG. The QLQ domain maps to 463 to 499; it reads GFTKQQLHVLKAQILAFRRLKKGEGSLPPELLQAISP. 2 stretches are compositionally biased toward basic and acidic residues: residues 517-537 and 611-621; these read VQDR…ECGK and PRSDSTADKGK. The span at 626-638 shows a compositional bias: polar residues; the sequence is DGSQSKVPPQANS. A Nuclear localization signal 1 motif is present at residues 705–712; that stretch reads LKKINGLL. Positions 726 to 795 form a coiled coil; that stretch reads VLRLQIEEKK…QKAVREKQLK (70 aa). The region spanning 993-1158 is the Helicase ATP-binding domain; sequence LSLYNNKLNG…WSLLNLLLPD (166 aa). 1006–1013 is a binding site for ATP; sequence DEMGLGKT. Residues 1109 to 1129 adopt a coiled-coil conformation; sequence DEAQRMKDRESVLARDLDRYR. A Helicase C-terminal domain is found at 1312 to 1489; it reads ILDRILIKLQ…QYKIDMADEV (178 aa). 2 disordered regions span residues 1583 to 1775 and 1789 to 1894; these read SKKP…DEEQ and LRPR…NAGA. Over residues 1608 to 1617 the composition is skewed to basic residues; it reads KRGRPKSKKI. Residues 1618 to 1638 are a coiled coil; sequence NYKEIEDDIAGYSEESSEERN. Serine 1641 bears the Phosphoserine mark. Over residues 1642 to 1657 the composition is skewed to acidic residues; it reads GNEEEGDIRQFDDDEL. Over residues 1821–1832 the composition is skewed to basic and acidic residues; the sequence is TVVDSHSSRQDQ. Residues 1833-1842 are compositionally biased toward low complexity; that stretch reads SDSSSRLRSV. Composition is skewed to polar residues over residues 1848-1870 and 1882-1892; these read ASTS…QLTV and DGTSPISSSNA. The region spanning 1895-2005 is the Bromo domain; it reads RMSHIIQKRC…NLFFDLLKMS (111 aa). Positions 1901–1908 match the Nuclear localization signal 2 motif; that stretch reads QKRCKIVI. A compositionally biased stretch (polar residues) spans 2022 to 2032; sequence GSAPTLVSTPT. Residues 2022 to 2193 are disordered; the sequence is GSAPTLVSTP…DSGKRRPSHL (172 aa). At serine 2137 the chain carries Phosphoserine. Positions 2149–2166 are enriched in polar residues; that stretch reads LAQQQRWPNQPTHPNNSG.

The protein belongs to the SNF2/RAD54 helicase family. Interacts with SWI3B, SWI3C, H3 and H4, but not with SWI3A, SWI3D or BSH. Interacts with LFY. Interacts with REF6. Binds to FGT1. Highly expressed in inflorescences and leaves. Low expression in siliques, roots and seedlings. Detected in shoot apical meristem, root meristem, vascular tissue of developing leaves, petals, stamens filaments, anthers and carpels.

It localises to the nucleus. It carries out the reaction ATP + H2O = ADP + phosphate + H(+). In terms of biological role, ATPase subunit of a multiprotein complex equivalent of the SWI/SNF complex that acts by remodeling the chromatin by catalyzing an ATP-dependent alteration in the structure of nucleosomal DNA. Represses embryonic genes in leaves and controls shoot development and flowering. Activates flower homeotic genes. The association of BRM with its target genes requires REF6. Necessary to acquire heat stress (HS) memory, by globally binding to HS memory genes. The sequence is that of ATP-dependent helicase BRM from Arabidopsis thaliana (Mouse-ear cress).